The primary structure comprises 466 residues: Argininosuccinate lyase (466 aa).

Belongs to the lyase 1 family. Argininosuccinate lyase subfamily.

It localises to the cytoplasm. It carries out the reaction 2-(N(omega)-L-arginino)succinate = fumarate + L-arginine. It functions in the pathway amino-acid biosynthesis; L-arginine biosynthesis; L-arginine from L-ornithine and carbamoyl phosphate: step 3/3. The polypeptide is Argininosuccinate lyase (Methylocella silvestris (strain DSM 15510 / CIP 108128 / LMG 27833 / NCIMB 13906 / BL2)).